A 147-amino-acid chain; its full sequence is Plasminogen receptor (KT) (147 aa).

The Extracellular portion of the chain corresponds to 1 to 52; it reads MGFIFSKSMNENMKNQQEFMVMHARLQLERQLIMQNEMRERQMAMQIAWSRE. The chain crosses the membrane as a helical span at residues 53-73; sequence FLKYFGTFFGIATISLAAGAI. Residues 74-78 are Cytoplasmic-facing; the sequence is KRKKP. The helical transmembrane segment at 79–99 threads the bilayer; it reads AFLIPIVPLSFIFTYQYDLGY. Topologically, residues 100–147 are extracellular; that stretch reads GTLLQRMKSEAEDILETEKTKLELPKGLITFESLEKARREQSKFFSDK.

In terms of assembly, interacts with PLAT. Interacts with PLAUR. Expressed in adrenal medulla (pheochromocytoma).

The protein localises to the cell membrane. Its function is as follows. Receptor for plasminogen. Regulates urokinase plasminogen activator-dependent and stimulates tissue-type plasminogen activator-dependent cell surface plasminogen activation. Proposed to be part of a local catecholaminergic cell plasminogen activation system that regulates neuroendocrine prohormone processing. Involved in regulation of inflammatory response; regulates monocyte chemotactic migration and matrix metalloproteinase activation, such as of MMP2 and MMP9. The chain is Plasminogen receptor (KT) (Plgrkt) from Rattus norvegicus (Rat).